A 179-amino-acid chain; its full sequence is Large ribosomal subunit protein uL5 (179 aa).

It belongs to the universal ribosomal protein uL5 family. As to quaternary structure, part of the 50S ribosomal subunit; part of the 5S rRNA/L5/L18/L25 subcomplex. Contacts the 5S rRNA and the P site tRNA. Forms a bridge to the 30S subunit in the 70S ribosome.

Functionally, this is one of the proteins that bind and probably mediate the attachment of the 5S RNA into the large ribosomal subunit, where it forms part of the central protuberance. In the 70S ribosome it contacts protein S13 of the 30S subunit (bridge B1b), connecting the 2 subunits; this bridge is implicated in subunit movement. Contacts the P site tRNA; the 5S rRNA and some of its associated proteins might help stabilize positioning of ribosome-bound tRNAs. The protein is Large ribosomal subunit protein uL5 of Geotalea uraniireducens (strain Rf4) (Geobacter uraniireducens).